Here is a 297-residue protein sequence, read N- to C-terminus: Ribosomal RNA small subunit methyltransferase A (297 aa).

Asparagine 31, leucine 33, glycine 58, glutamate 79, aspartate 104, and asparagine 129 together coordinate S-adenosyl-L-methionine.

The protein belongs to the class I-like SAM-binding methyltransferase superfamily. rRNA adenine N(6)-methyltransferase family. RsmA subfamily.

The protein localises to the cytoplasm. The enzyme catalyses adenosine(1518)/adenosine(1519) in 16S rRNA + 4 S-adenosyl-L-methionine = N(6)-dimethyladenosine(1518)/N(6)-dimethyladenosine(1519) in 16S rRNA + 4 S-adenosyl-L-homocysteine + 4 H(+). Specifically dimethylates two adjacent adenosines (A1518 and A1519) in the loop of a conserved hairpin near the 3'-end of 16S rRNA in the 30S particle. May play a critical role in biogenesis of 30S subunits. In Staphylococcus aureus (strain Mu3 / ATCC 700698), this protein is Ribosomal RNA small subunit methyltransferase A.